A 396-amino-acid chain; its full sequence is Ribosomal RNA large subunit methyltransferase I (396 aa).

The PUA domain maps to S2–F79.

Belongs to the methyltransferase superfamily. RlmI family.

It localises to the cytoplasm. The catalysed reaction is cytidine(1962) in 23S rRNA + S-adenosyl-L-methionine = 5-methylcytidine(1962) in 23S rRNA + S-adenosyl-L-homocysteine + H(+). Functionally, specifically methylates the cytosine at position 1962 (m5C1962) of 23S rRNA. The chain is Ribosomal RNA large subunit methyltransferase I from Aeromonas salmonicida (strain A449).